Reading from the N-terminus, the 700-residue chain is Calpain-2 catalytic subunit (700 aa).

A2 carries the post-translational modification N-acetylalanine. Positions 2 to 19 (AGIAMKLAKDREAAEGLG) are cleaved as a propeptide — anchors to the small subunit. Positions 45-344 (LFQDPSFPAL…YSRLEICNLT (300 aa)) constitute a Calpain catalytic domain. The Ca(2+) site is built by I89, G91, and D96. Residue C105 is part of the active site. Ca(2+) is bound by residues E175, Q229, and K230. Residues H262 and N286 contribute to the active site. Positions 292, 299, 319, and 323 each coordinate Ca(2+). The tract at residues 345 to 514 (PDTLTCDSYK…KKADYQTVDD (170 aa)) is domain III. Residues 515–529 (EIEANIEEIEANEED) form a linker region. The domain IV stretch occupies residues 530-700 (IGDGFRRLFA…LISWLSFSVL (171 aa)). A542, D545, E547, E552, D585, D587, S589, K591, E596, D615, D617, S619, T621, E626, D658, and N661 together coordinate Ca(2+). EF-hand domains are found at residues 572-605 (FSIE…TKIQ) and 602-637 (TKIQ…AGFK). Residues 667–700 (VRLEILFKIFKQLDPENTGTIQLDLISWLSFSVL) form the EF-hand 3 domain.

Belongs to the peptidase C2 family. In terms of assembly, forms a heterodimer with a small (regulatory) subunit (CAPNS1). Interacts with CPEB3; this leads to cleavage of CPEB3. Ca(2+) is required as a cofactor. As to expression, ubiquitous.

It localises to the cytoplasm. Its subcellular location is the cell membrane. The enzyme catalyses Broad endopeptidase specificity.. Activated by 200-1000 micromolar concentrations of calcium and inhibited by calpastatin. Its function is as follows. Calcium-regulated non-lysosomal thiol-protease which catalyze limited proteolysis of substrates involved in cytoskeletal remodeling and signal transduction. Proteolytically cleaves MYOC at 'Arg-226'. Proteolytically cleaves CPEB3 following neuronal stimulation which abolishes CPEB3 translational repressor activity, leading to translation of CPEB3 target mRNAs. This is Calpain-2 catalytic subunit (Capn2) from Rattus norvegicus (Rat).